The sequence spans 435 residues: Hydrogenobyrinate a,c-diamide synthase (435 aa).

Residues 239–422 (RIGVARDASF…IHFYLPSNPQ (184 aa)) enclose the GATase cobBQ-type domain. Cysteine 321 acts as the Nucleophile in catalysis.

This sequence belongs to the CobB/CbiA family. It depends on Mg(2+) as a cofactor.

It catalyses the reaction hydrogenobyrinate + 2 L-glutamine + 2 ATP + 2 H2O = hydrogenobyrinate a,c-diamide + 2 L-glutamate + 2 ADP + 2 phosphate + 2 H(+). It participates in cofactor biosynthesis; adenosylcobalamin biosynthesis; cob(II)yrinate a,c-diamide from precorrin-2 (aerobic route): step 9/10. Functionally, catalyzes the ATP-dependent amidation of the two carboxylate groups at positions a and c of hydrogenobyrinate, using either L-glutamine or ammonia as the nitrogen source. In Pseudomonas aeruginosa (strain ATCC 15692 / DSM 22644 / CIP 104116 / JCM 14847 / LMG 12228 / 1C / PRS 101 / PAO1), this protein is Hydrogenobyrinate a,c-diamide synthase.